A 272-amino-acid polypeptide reads, in one-letter code: Formamidopyrimidine-DNA glycosylase (272 aa).

Residue Pro-2 is the Schiff-base intermediate with DNA of the active site. Catalysis depends on Glu-3, which acts as the Proton donor. Catalysis depends on Lys-58, which acts as the Proton donor; for beta-elimination activity. DNA contacts are provided by His-93, Arg-112, and Arg-153. Residues 238–272 form an FPG-type zinc finger; sequence HVYGKSGQHCPKCGNILEDLKISNRGTVYCPHCQR. The active-site Proton donor; for delta-elimination activity is the Arg-262.

Belongs to the FPG family. Monomer. Zn(2+) serves as cofactor.

It catalyses the reaction Hydrolysis of DNA containing ring-opened 7-methylguanine residues, releasing 2,6-diamino-4-hydroxy-5-(N-methyl)formamidopyrimidine.. The catalysed reaction is 2'-deoxyribonucleotide-(2'-deoxyribose 5'-phosphate)-2'-deoxyribonucleotide-DNA = a 3'-end 2'-deoxyribonucleotide-(2,3-dehydro-2,3-deoxyribose 5'-phosphate)-DNA + a 5'-end 5'-phospho-2'-deoxyribonucleoside-DNA + H(+). Its function is as follows. Involved in base excision repair of DNA damaged by oxidation or by mutagenic agents. Acts as a DNA glycosylase that recognizes and removes damaged bases. Has a preference for oxidized purines, such as 7,8-dihydro-8-oxoguanine (8-oxoG). Has AP (apurinic/apyrimidinic) lyase activity and introduces nicks in the DNA strand. Cleaves the DNA backbone by beta-delta elimination to generate a single-strand break at the site of the removed base with both 3'- and 5'-phosphates. In Dichelobacter nodosus (strain VCS1703A), this protein is Formamidopyrimidine-DNA glycosylase.